Consider the following 958-residue polypeptide: Structure-specific endonuclease subunit SLX4 (958 aa).

Disordered stretches follow at residues 89–123 (AESP…KGKT), 183–209 (QKKA…GPID), 326–400 (LATA…LSPT), 531–589 (DLTI…EQHQ), 594–613 (QSNT…SFEL), and 655–849 (STAA…SPPA). Residues 109–121 (KKPRTAGARKKKG) show a composition bias toward basic residues. Residues 332-341 (RRPEEAERST) are compositionally biased toward basic and acidic residues. Polar residues predominate over residues 342-351 (LSRQQDTHIP). Over residues 364–373 (AASKSASAKP) the composition is skewed to low complexity. A compositionally biased stretch (basic residues) spans 374–389 (KAAKKAPKPRATKKKQ). Residues 600 to 610 (QPQPAPPPPPS) are compositionally biased toward pro residues. Low complexity-rich tracts occupy residues 655-666 (STAAQAAMSTSA), 775-787 (TTSP…RAKA), and 821-838 (PDSG…SSPD).

The protein belongs to the SLX4 family. As to quaternary structure, forms a heterodimer with SLX1. Phosphorylated in response to DNA damage.

The protein localises to the nucleus. In terms of biological role, regulatory subunit of the SLX1-SLX4 structure-specific endonuclease that resolves DNA secondary structures generated during DNA repair and recombination. Has endonuclease activity towards branched DNA substrates, introducing single-strand cuts in duplex DNA close to junctions with ss-DNA. The chain is Structure-specific endonuclease subunit SLX4 from Chaetomium globosum (strain ATCC 6205 / CBS 148.51 / DSM 1962 / NBRC 6347 / NRRL 1970) (Soil fungus).